Reading from the N-terminus, the 236-residue chain is DNA repair protein RecO (236 aa).

The protein belongs to the RecO family.

Functionally, involved in DNA repair and RecF pathway recombination. The sequence is that of DNA repair protein RecO from Stutzerimonas stutzeri (strain A1501) (Pseudomonas stutzeri).